We begin with the raw amino-acid sequence, 549 residues long: E-selectin (549 aa).

An N-terminal signal peptide occupies residues 1-21 (MNASCFLSALTFVLLIGKSIA). The region spanning 22–139 (WYYNASSELM…CDKKKLALCY (118 aa)) is the C-type lectin domain. The Extracellular segment spans residues 22 to 494 (WYYNASSELM…CEAPANPPRP (473 aa)). Residues asparagine 25 and asparagine 60 are each glycosylated (N-linked (GlcNAc...) asparagine). 17 cysteine pairs are disulfide-bonded: cysteine 40-cysteine 138, cysteine 111-cysteine 130, cysteine 143-cysteine 154, cysteine 148-cysteine 163, cysteine 165-cysteine 174, cysteine 180-cysteine 225, cysteine 193-cysteine 206, cysteine 210-cysteine 238, cysteine 243-cysteine 287, cysteine 256-cysteine 269, cysteine 273-cysteine 300, cysteine 305-cysteine 350, cysteine 336-cysteine 363, cysteine 368-cysteine 413, cysteine 399-cysteine 426, cysteine 431-cysteine 472, and cysteine 458-cysteine 485. Glutamate 101, asparagine 103, and glutamate 109 together coordinate Ca(2+). A carbohydrate contacts are provided by residues 101–109 (EPNNKQRNE), 113–118 (EIYIQR), and 126–128 (NDE). Residues asparagine 126 and aspartate 127 each coordinate Ca(2+). The EGF-like domain maps to 140–175 (TASCTNTSCSGHGECVETINSYTCKCHPGFLGPKCD). N-linked (GlcNAc...) asparagine glycosylation occurs at asparagine 145. Sushi domains lie at 178–240 (VTCQ…ACHV), 241–302 (VECK…SCKA), 303–365 (VTCD…VCKA), 366–428 (SQCE…TCAG), and 429–487 (VQCS…TCEA). N-linked (GlcNAc...) asparagine glycans are attached at residues asparagine 192 and asparagine 203. N-linked (GlcNAc...) asparagine glycosylation is present at asparagine 266. Asparagine 313, asparagine 320, and asparagine 333 each carry an N-linked (GlcNAc...) asparagine glycan. 2 N-linked (GlcNAc...) asparagine glycosylation sites follow: asparagine 441 and asparagine 465. Residues 495-516 (LVVALSVAATSLLTLSSLIYVL) traverse the membrane as a helical segment. Topologically, residues 517 to 549 (KRFFWKKAKKFVPASSCQSLQSFENYQGPSYII) are cytoplasmic.

Belongs to the selectin/LECAM family. Interacts with SELPLG/PSGL1 and PODXL2 through the sialyl Lewis X epitope. SELPLG sulfation appears not to be required for this interaction.

It is found in the cell membrane. Functionally, cell-surface glycoprotein having a role in immunoadhesion. Mediates in the adhesion of blood neutrophils in cytokine-activated endothelium through interaction with SELPLG/PSGL1. May have a role in capillary morphogenesis. The chain is E-selectin (Sele) from Rattus norvegicus (Rat).